A 24-amino-acid chain; its full sequence is Glutamate dehydrogenase (24 aa).

This sequence belongs to the Glu/Leu/Phe/Val dehydrogenases family. As to quaternary structure, homohexamer.

It is found in the cytoplasm. The catalysed reaction is L-glutamate + NAD(+) + H2O = 2-oxoglutarate + NH4(+) + NADH + H(+). The enzyme catalyses L-glutamate + NADP(+) + H2O = 2-oxoglutarate + NH4(+) + NADPH + H(+). The chain is Glutamate dehydrogenase (gdhA) from Pyrococcus woesei.